Reading from the N-terminus, the 254-residue chain is Low affinity immunoglobulin gamma Fc region receptor III-A (254 aa).

Positions 1-16 (MWQLLLPTALLLLVSA) are cleaved as a signal peptide. Topologically, residues 17 to 208 (GMRAEDLPKA…ISSFFPPGYQ (192 aa)) are extracellular. Ig-like C2-type domains are found at residues 24-105 (PKAV…LEVH) and 107-189 (GWLL…VNIT). Disulfide bonds link Cys47–Cys89 and Cys128–Cys172. Residues Asn56, Asn63, and Asn82 are each glycosylated (N-linked (GlcNAc...) asparagine). N-linked (GlcNAc...) asparagine glycans are attached at residues Asn180 and Asn187. The chain crosses the membrane as a helical span at residues 209–229 (VSFCLVMVLLFAVDTGLYFSM). Over 230-254 (KKSIPSSTRDWEDHKFKWSKDPQDK) the chain is Cytoplasmic.

In terms of assembly, forms a heterooligomeric complex with ITAM-containing signaling subunits, either a homodimer of CD247, a homodimer of FCER1G or a heterodimer of CD247 and FCER1G. Interacts (via transmembrane domain) with signaling subunits; this interaction is a prerequisite for receptor complex expression on the cell surface and intracellular signal transduction. Binds the Fc region of antigen-complexed IgG with a preference for IgG1 and IgG3 isotypes. Interacts with CD2; this interaction is involved in NK cell activation and cytotoxicity. Interacts with S100A4; this interaction inhibits PKC-dependent phosphorylation of FCGR3A. Glycosylated. Glycosylation plays an inhibitory role in the interaction with IgG1 and IgG2. Post-translationally, undergoes rapid ectodomain shedding upon NK cell stimulation. The soluble form is produced by a proteolytic cleavage mediated by ADAM17. Repeated stimulation causes receptor shedding, a mechanism that allows for increased NK cell motility and detachment from opsonized target cells while avoiding activation-induced NK cell apoptosis. As to expression, lymphocytes and monocytes.

The protein resides in the cell membrane. The protein localises to the secreted. Receptor for the invariable Fc fragment of immunoglobulin gamma (IgG). Optimally activated upon binding of clustered antigen-IgG complexes displayed on cell surfaces, triggers lysis of antibody-coated cells, a process known as antibody-dependent cellular cytotoxicity (ADCC). Does not bind free monomeric IgG, thus avoiding inappropriate effector cell activation in the absence of antigenic trigger. Mediates IgG effector functions on natural killer (NK) cells. Binds antigen-IgG complexes generated upon infection and triggers NK cell-dependent cytokine production and degranulation to limit viral load and propagation. Involved in the generation of memory-like adaptive NK cells capable to produce high amounts of IFNG and to efficiently eliminate virus-infected cells via ADCC. Regulates NK cell survival and proliferation, in particular by preventing NK cell progenitor apoptosis. Fc-binding subunit that associates with CD247 and/or FCER1G adapters to form functional signaling complexes. Following the engagement of antigen-IgG complexes, triggers phosphorylation of immunoreceptor tyrosine-based activation motif (ITAM)-containing adapters with subsequent activation of phosphatidylinositol 3-kinase signaling and sustained elevation of intracellular calcium that ultimately drive NK cell activation. The ITAM-dependent signaling coupled to receptor phosphorylation by PKC mediates robust intracellular calcium flux that leads to production of pro-inflammatory cytokines, whereas in the absence of receptor phosphorylation it mainly activates phosphatidylinositol 3-kinase signaling leading to cell degranulation. Costimulates NK cells and trigger lysis of target cells independently of IgG binding. Mediates the antitumor activities of therapeutic antibodies. Upon ligation on monocytes triggers TNFA-dependent ADCC of IgG-coated tumor cells. Mediates enhanced ADCC in response to afucosylated IgGs. The sequence is that of Low affinity immunoglobulin gamma Fc region receptor III-A (FCGR3A) from Macaca fascicularis (Crab-eating macaque).